A 328-amino-acid polypeptide reads, in one-letter code: Carbonic anhydrase-related protein 11 (328 aa).

An N-terminal signal peptide occupies residues 1 to 23 (MGAAARLSAPRALVLWAALGAAA). The Alpha-carbonic anhydrase domain maps to 33-303 (DWWSYKDNLQ…LAHRALRGNR (271 aa)). N-linked (GlcNAc...) asparagine glycans are attached at residues Asn-118, Asn-170, and Asn-260. The segment at 299-328 (LRGNRDPRHPERRCRGPNYRLHVDGAPHGR) is disordered. The span at 319 to 328 (LHVDGAPHGR) shows a compositional bias: basic and acidic residues.

It belongs to the alpha-carbonic anhydrase family.

It is found in the secreted. In terms of biological role, does not have a catalytic activity. The sequence is that of Carbonic anhydrase-related protein 11 (CA11) from Pongo abelii (Sumatran orangutan).